A 317-amino-acid chain; its full sequence is Large ribosomal subunit protein uL10 (317 aa).

Residues 286–317 (AGAGAAAEKKEEAKKEESESEEDDDMGFGLFD) form a disordered region. Positions 292 to 302 (AEKKEEAKKEE) are enriched in basic and acidic residues.

Belongs to the universal ribosomal protein uL10 family. P0 forms a pentameric complex by interaction with dimers of P1 and P2. Phosphorylated.

Functionally, ribosomal protein P0 is the functional equivalent of E.coli protein L10. The polypeptide is Large ribosomal subunit protein uL10 (RpLP0) (Ceratitis capitata (Mediterranean fruit fly)).